The chain runs to 146 residues: Calmodulin-like protein 5 (146 aa).

Alanine 2 carries the post-translational modification N-acetylalanine. EF-hand domains lie at 8-43 (EEEA…TGKN), 44-74 (LSEA…TAAK), 78-113 (AGLE…LGQP), and 114-146 (LPQE…LAQE). Aspartate 21, aspartate 23, asparagine 25, threonine 27, glutamate 32, aspartate 57, aspartate 59, aspartate 61, glutamate 63, glutamate 68, aspartate 91, aspartate 93, aspartate 95, histidine 97, glutamate 102, aspartate 127, aspartate 129, aspartate 131, arginine 133, and glutamate 138 together coordinate Ca(2+).

Associates with transglutaminase 3. Particularly abundant in the epidermis where its expression is directly related to keratinocyte differentiation. Very low expression in lung.

Its function is as follows. Binds calcium. May be involved in terminal differentiation of keratinocytes. This Homo sapiens (Human) protein is Calmodulin-like protein 5 (CALML5).